The following is a 447-amino-acid chain: Gamma-glutamyl phosphate reductase (447 aa).

Belongs to the gamma-glutamyl phosphate reductase family.

Its subcellular location is the cytoplasm. The enzyme catalyses L-glutamate 5-semialdehyde + phosphate + NADP(+) = L-glutamyl 5-phosphate + NADPH + H(+). It functions in the pathway amino-acid biosynthesis; L-proline biosynthesis; L-glutamate 5-semialdehyde from L-glutamate: step 2/2. Catalyzes the NADPH-dependent reduction of L-glutamate 5-phosphate into L-glutamate 5-semialdehyde and phosphate. The product spontaneously undergoes cyclization to form 1-pyrroline-5-carboxylate. This is Gamma-glutamyl phosphate reductase from Methanosarcina mazei (strain ATCC BAA-159 / DSM 3647 / Goe1 / Go1 / JCM 11833 / OCM 88) (Methanosarcina frisia).